A 510-amino-acid chain; its full sequence is Flagellin A (510 aa).

The protein belongs to the bacterial flagellin family. In terms of assembly, heteromer of FlaA and FlaB. FlaB is located proximal to the hook while the remainder of the filament is composed of the predominant FlaA.

It localises to the secreted. Its subcellular location is the bacterial flagellum. Functionally, flagellin is the subunit protein which polymerizes to form the filaments of bacterial flagella. Important for motility and virulence. This is Flagellin A (flaA) from Helicobacter pylori (strain ATCC 700392 / 26695) (Campylobacter pylori).